We begin with the raw amino-acid sequence, 534 residues long: Transcription factor RBF1 (534 aa).

Positions Met-1–Ser-36 are disordered. The stretch at Ala-77–Leu-147 forms a coiled coil. 4 disordered regions span residues Ala-262–Glu-285, Gln-353–Ala-372, Gln-402–Leu-439, and Thr-477–Leu-534. Positions Asn-267 to Glu-285 are enriched in basic and acidic residues. A coiled-coil region spans residues His-332–Gly-386. The span at Gln-402–Thr-435 shows a compositional bias: low complexity.

The protein belongs to the RBF1 family.

It localises to the nucleus. The protein resides in the chromosome. It is found in the telomere. Transcriptional activator that binds to the RPG box and to telomeres. Involved in the regulation of the transition between yeast and filamentous forms and plays a role in virulence. Induces expression of HWP1, a major hyphal cell protein and virulence factor. In Candida albicans (strain SC5314 / ATCC MYA-2876) (Yeast), this protein is Transcription factor RBF1 (RBF1).